A 230-amino-acid chain; its full sequence is uncharacterized protein (230 aa).

The segment at 1–57 (MPGPHSPNPGVGTNGPAPYPEPSSHEPQALDYPHDLGAAEPAFAPGPADDAALPPAA) is disordered. The segment covering 38-55 (AAEPAFAPGPADDAALPP) has biased composition (low complexity). Residues 75-95 (LLIGIVVALALVSAMTAAIIY) form a helical membrane-spanning segment.

It is found in the membrane. This is an uncharacterized protein from Mycobacterium tuberculosis (strain CDC 1551 / Oshkosh).